The chain runs to 86 residues: Small ribosomal subunit protein uS15 (86 aa).

A disordered region spans residues 1–22 (MSVDTQKVIEDNKRSAQDTGSP). Basic and acidic residues predominate over residues 7–16 (KVIEDNKRSA).

This sequence belongs to the universal ribosomal protein uS15 family. As to quaternary structure, part of the 30S ribosomal subunit. Forms a bridge to the 50S subunit in the 70S ribosome, contacting the 23S rRNA.

In terms of biological role, one of the primary rRNA binding proteins, it binds directly to 16S rRNA where it helps nucleate assembly of the platform of the 30S subunit by binding and bridging several RNA helices of the 16S rRNA. Its function is as follows. Forms an intersubunit bridge (bridge B4) with the 23S rRNA of the 50S subunit in the ribosome. This chain is Small ribosomal subunit protein uS15, found in Xanthomonas axonopodis pv. citri (strain 306).